A 1211-amino-acid chain; its full sequence is DNA polymerase beta (1211 aa).

4 repeat units span residues 1074–1077 (KPAG), 1078–1081 (KPAG), 1082–1085 (NPAG), and 1086–1089 (NPAG). Residues 1074–1089 (KPAGKPAGNPAGNPAG) form a 4 X 4 AA tandem repeats of [NK]-[P]-A-G region.

It belongs to the DNA polymerase type-B family.

The enzyme catalyses DNA(n) + a 2'-deoxyribonucleoside 5'-triphosphate = DNA(n+1) + diphosphate. Functionally, DNA-directed DNA polymerase involved in viral DNA replication. In African swine fever virus (strain Badajoz 1971 Vero-adapted) (Ba71V), this protein is DNA polymerase beta (DPOL).